The chain runs to 947 residues: DEAD-box ATP-dependent RNA helicase 45 (947 aa).

Acidic residues predominate over residues 1–14 (MEEEEVVVVVDEEE). Disordered regions lie at residues 1–132 (MEEE…EDEI) and 159–221 (SMPA…EEFM). 2 stretches are compositionally biased toward basic and acidic residues: residues 15–31 (SERR…KRLD) and 42–61 (KEWQ…REQE). Positions 62–82 (AAAGAGTPAAAAGADGDSNAG) are enriched in low complexity. Acidic residues-rich tracts occupy residues 88-108 (DGEE…EDDG) and 196-219 (DDSD…DDEE). A Q motif motif is present at residues 285-313 (KTWVQSGLTSKLLDTIKKLGFEKPMPIQA). One can recognise a Helicase ATP-binding domain in the interval 316 to 494 (LPIIMSGRDC…RKVLTKPVEI (179 aa)). An ATP-binding site is contributed by 329 to 336 (AKTGSGKT). The DEAD box motif lies at 442 to 445 (DEAD). Residues 479–647 (QVEILARKVL…AVPQDLKGLA (169 aa)) enclose the Helicase C-terminal domain. Residues 658–710 (TEQAHGTGYGGSGFKFNEEEDEARRSAKKAQAREYGYEEDKSDSDSDEEGGVR) are disordered. Acidic residues predominate over residues 697-706 (DKSDSDSDEE). The stretch at 854–879 (TELSVKKAKSELKRVLEDCANHALNL) forms a coiled coil.

The protein belongs to the DEAD box helicase family. DDX46/PRP5 subfamily.

It carries out the reaction ATP + H2O = ADP + phosphate + H(+). In Oryza sativa subsp. japonica (Rice), this protein is DEAD-box ATP-dependent RNA helicase 45.